We begin with the raw amino-acid sequence, 396 residues long: Cathepsin D (396 aa).

Residues 1–18 (MKFLYLFLFAVFAWTSDA) form the signal peptide. The propeptide at 19–61 (IVRIPLKKFRSIRRTLSDSGLNVEQLLAGTNSLQHNQGFPSSN) is activation peptide. The Peptidase A1 domain maps to 76 to 393 (YYGEIGLGTP…DRESNRVGFA (318 aa)). Residue aspartate 94 is part of the active site. An intrachain disulfide couples cysteine 107 to cysteine 114. A glycan (N-linked (GlcNAc...) asparagine) is linked at asparagine 131. An intrachain disulfide couples cysteine 272 to cysteine 276. Residue aspartate 281 is part of the active site. Cysteines 315 and 352 form a disulfide.

The protein belongs to the peptidase A1 family. As to quaternary structure, monomer.

It is found in the lysosome. It catalyses the reaction Specificity similar to, but narrower than, that of pepsin A. Does not cleave the 4-Gln-|-His-5 bond in B chain of insulin.. Inhibited by pepstatin. Its function is as follows. Acid protease active in intracellular protein breakdown. In Clupea harengus (Atlantic herring), this protein is Cathepsin D (ctsd).